A 1758-amino-acid polypeptide reads, in one-letter code: RanBP2-like and GRIP domain-containing protein 4 (1758 aa).

Residue Ser-21 is modified to Phosphoserine. TPR repeat units lie at residues Pro-60–Gln-93 and Gln-584–Ile-617. Residues Asp-761–Ala-805 are disordered. A compositionally biased stretch (low complexity) spans Ser-779 to Pro-798. In terms of domain architecture, RanBD1 1 spans His-1037–Asp-1173. Disordered regions lie at residues Gln-1213–Trp-1249 and Ser-1295–Gly-1332. A compositionally biased stretch (polar residues) spans Ile-1236–Pro-1245. The span at Ser-1295–Leu-1309 shows a compositional bias: low complexity. Positions Thr-1318 to Arg-1330 are enriched in acidic residues. A RanBD1 2 domain is found at Tyr-1334–Lys-1470. The span at Ser-1583–Glu-1594 shows a compositional bias: polar residues. The segment at Ser-1583–Leu-1621 is disordered. The span at Ser-1595 to Val-1618 shows a compositional bias: basic and acidic residues. A GRIP domain is found at Gln-1703 to Val-1753.

The chain is RanBP2-like and GRIP domain-containing protein 4 (RGPD4) from Homo sapiens (Human).